The following is a 402-amino-acid chain: Rubredoxin-oxygen oxidoreductase (402 aa).

A zinc metallo-hydrolase region spans residues 30–216 (PMGTTYNAYL…KAIETLVGAG (187 aa)). 6 residues coordinate Fe cation: histidine 79, glutamate 81, aspartate 83, histidine 146, aspartate 165, and histidine 226. A Flavodoxin-like domain is found at 255–393 (VVIFYDSMWH…QLKTMAQTIA (139 aa)).

This sequence in the N-terminal section; belongs to the zinc metallo-hydrolase group 3 family. As to quaternary structure, homodimer. It depends on FMN as a cofactor. Requires Fe cation as cofactor.

It participates in energy metabolism; electron transfer. Functionally, catalyzes the four-electron reduction of one oxygen molecule to two water molecules. The chain is Rubredoxin-oxygen oxidoreductase (roo) from Megalodesulfovibrio gigas (strain ATCC 19364 / DSM 1382 / NCIMB 9332 / VKM B-1759) (Desulfovibrio gigas).